The chain runs to 290 residues: Ribosomal RNA small subunit methyltransferase A (290 aa).

Residues Asn-27, Leu-29, Gly-54, Glu-75, Asp-100, and Asn-125 each contribute to the S-adenosyl-L-methionine site.

This sequence belongs to the class I-like SAM-binding methyltransferase superfamily. rRNA adenine N(6)-methyltransferase family. RsmA subfamily.

It is found in the cytoplasm. It catalyses the reaction adenosine(1518)/adenosine(1519) in 16S rRNA + 4 S-adenosyl-L-methionine = N(6)-dimethyladenosine(1518)/N(6)-dimethyladenosine(1519) in 16S rRNA + 4 S-adenosyl-L-homocysteine + 4 H(+). Functionally, specifically dimethylates two adjacent adenosines (A1518 and A1519) in the loop of a conserved hairpin near the 3'-end of 16S rRNA in the 30S particle. May play a critical role in biogenesis of 30S subunits. This chain is Ribosomal RNA small subunit methyltransferase A, found in Streptococcus pneumoniae (strain 70585).